A 116-amino-acid chain; its full sequence is Large ribosomal subunit protein bL19 (116 aa).

It belongs to the bacterial ribosomal protein bL19 family.

Functionally, this protein is located at the 30S-50S ribosomal subunit interface and may play a role in the structure and function of the aminoacyl-tRNA binding site. This chain is Large ribosomal subunit protein bL19 (rplS), found in Streptomyces lividans.